A 421-amino-acid chain; its full sequence is MNDQTLDPAIHIQQLGTAARDAARGLVSASTEAKNKALMEAARALREATPALLEANARDVASVEGKKDEAFIDRLKLDEARVEGMASALEQIAELPDPVGRVLAQFDRPNGLRIERVAVPIGVIGMIYESRPNVGADASALCLKSGNAVILRGGSESRHSTREIVACMQAGLKAAGLPENAVQTVQTTDRNAVAELLKADEHVDLVIPRGGRGLVELVRDQASVPTLLHLDGNCHSYVHEAADVAKAVDVVRNAKLRRTGICGATESVVVDRVIAPALILALADAMAGDCELRGDETAVQLDDRITPASEDDWNTEYLGPIASVKVVDGLDEAIEWVEGHSSHHTDAILTEDAEAARRFMTAIDSAIVMHNASTQFADGGEFGMGAEIGIATGKMHARGPVGLEQLTSFKYLVHGSGQTRE.

It belongs to the gamma-glutamyl phosphate reductase family.

Its subcellular location is the cytoplasm. The catalysed reaction is L-glutamate 5-semialdehyde + phosphate + NADP(+) = L-glutamyl 5-phosphate + NADPH + H(+). It functions in the pathway amino-acid biosynthesis; L-proline biosynthesis; L-glutamate 5-semialdehyde from L-glutamate: step 2/2. Its function is as follows. Catalyzes the NADPH-dependent reduction of L-glutamate 5-phosphate into L-glutamate 5-semialdehyde and phosphate. The product spontaneously undergoes cyclization to form 1-pyrroline-5-carboxylate. This chain is Gamma-glutamyl phosphate reductase, found in Erythrobacter litoralis (strain HTCC2594).